Consider the following 396-residue polypeptide: Gap junction gamma-1 protein (396 aa).

Residues Met-1–Lys-22 lie on the Cytoplasmic side of the membrane. Residues Ile-23–Tyr-45 form a helical membrane-spanning segment. Residues Asp-46 to Arg-75 are Extracellular-facing. Residues Phe-76–Ala-95 form a helical membrane-spanning segment. Over Ile-96–Lys-175 the chain is Cytoplasmic. Residues Glu-145–Arg-165 are disordered. Residues Glu-147–Asn-156 are compositionally biased toward basic and acidic residues. The helical transmembrane segment at Ile-176–Leu-198 threads the bilayer. The Extracellular portion of the chain corresponds to Tyr-199–Lys-228. Residues Thr-229–Trp-248 form a helical membrane-spanning segment. Residues Glu-249–Ile-396 lie on the Cytoplasmic side of the membrane. The segment at Ala-355–Ile-396 is disordered. Positions Gly-373–Ile-396 are enriched in low complexity.

Belongs to the connexin family. Gamma-type subfamily. As to quaternary structure, a connexon is composed of a hexamer of connexins. Interacts with CNST.

Its subcellular location is the cell membrane. The protein resides in the cell junction. It is found in the gap junction. Its function is as follows. One gap junction consists of a cluster of closely packed pairs of transmembrane channels, the connexons, through which materials of low MW diffuse from one cell to a neighboring cell. This Canis lupus familiaris (Dog) protein is Gap junction gamma-1 protein (GJC1).